The sequence spans 325 residues: Delta(1)-pyrroline-2-carboxylate reductase (325 aa).

This sequence belongs to the ornithine cyclodeaminase/mu-crystallin family.

The enzyme catalyses L-proline + NAD(+) = 1-pyrroline-2-carboxylate + NADH + H(+). It carries out the reaction L-proline + NADP(+) = 1-pyrroline-2-carboxylate + NADPH + H(+). Its function is as follows. Catalyzes the reduction of Delta(1)-pyrroline-2-carboxylate (Pyr2C) to L-proline, using preferentially NADPH over NADH as the electron donor. May be involved in a degradation pathway that converts trans-3-hydroxy-L-proline (t3LHyp) to L-proline. This Bacillus cereus (strain ZK / E33L) protein is Delta(1)-pyrroline-2-carboxylate reductase.